The sequence spans 227 residues: Zinc finger protein 511 (227 aa).

3 consecutive C2H2-type zinc fingers follow at residues 80-105, 107-130, and 144-169; these read FTCQ…HMMH, NTCS…LEWH, and YQCL…VRLH. The segment at 180-204 is disordered; the sequence is PKTNRGPAMPAAADAATRAPTDDSD. Residues 186–198 are compositionally biased toward low complexity; it reads PAMPAAADAATRA.

This sequence belongs to the krueppel C2H2-type zinc-finger protein family.

It localises to the nucleus. Its function is as follows. May be involved in transcriptional regulation. This chain is Zinc finger protein 511 (Znf511), found in Mus musculus (Mouse).